Here is a 285-residue protein sequence, read N- to C-terminus: 4-diphosphocytidyl-2-C-methyl-D-erythritol kinase (285 aa).

Residue Lys12 is part of the active site. 95–105 provides a ligand contact to ATP; that stretch reads PMGGGVGGGSS. Residue Asp137 is part of the active site.

This sequence belongs to the GHMP kinase family. IspE subfamily.

The catalysed reaction is 4-CDP-2-C-methyl-D-erythritol + ATP = 4-CDP-2-C-methyl-D-erythritol 2-phosphate + ADP + H(+). Its pathway is isoprenoid biosynthesis; isopentenyl diphosphate biosynthesis via DXP pathway; isopentenyl diphosphate from 1-deoxy-D-xylulose 5-phosphate: step 3/6. Functionally, catalyzes the phosphorylation of the position 2 hydroxy group of 4-diphosphocytidyl-2C-methyl-D-erythritol. This chain is 4-diphosphocytidyl-2-C-methyl-D-erythritol kinase, found in Actinobacillus pleuropneumoniae serotype 7 (strain AP76).